A 124-amino-acid polypeptide reads, in one-letter code: uncharacterized protein (124 aa).

The protein belongs to the asfivirus H124R family.

The protein localises to the virion. This is an uncharacterized protein from Ornithodoros (relapsing fever ticks).